Here is a 394-residue protein sequence, read N- to C-terminus: Elongation factor Tu (394 aa).

In terms of domain architecture, tr-type G spans 10-204 (KPHVNVGTIG…ALDTYIPEPE (195 aa)). The tract at residues 19–26 (GHVDHGKT) is G1. A GTP-binding site is contributed by 19-26 (GHVDHGKT). Thr-26 provides a ligand contact to Mg(2+). Positions 60 to 64 (GITIN) are G2. Residues 81-84 (DCPG) are G3. GTP contacts are provided by residues 81–85 (DCPGH) and 136–139 (NKCD). The interval 136-139 (NKCD) is G4. The segment at 174–176 (SAL) is G5.

Belongs to the TRAFAC class translation factor GTPase superfamily. Classic translation factor GTPase family. EF-Tu/EF-1A subfamily. As to quaternary structure, monomer.

Its subcellular location is the cytoplasm. The catalysed reaction is GTP + H2O = GDP + phosphate + H(+). In terms of biological role, GTP hydrolase that promotes the GTP-dependent binding of aminoacyl-tRNA to the A-site of ribosomes during protein biosynthesis. This is Elongation factor Tu from Shewanella sediminis (strain HAW-EB3).